We begin with the raw amino-acid sequence, 1275 residues long: Myosin-1 (1275 aa).

The region spanning 35 to 727 (VGVSDLTLLS…TLFAMEDMRD (693 aa)) is the Myosin motor domain. ATP is bound at residue 128–135 (GESGAGKT). Residue S361 is modified to Phosphoserine. The segment at 410 to 493 (TIGILDIYGF…PGLFAALNDS (84 aa)) is actin-binding. IQ domains lie at 731-751 (HNMA…KEDA) and 752-777 (ARLI…YGNG). The region spanning 785–974 (RRRMSMLGSR…KSGTVSVRPG (190 aa)) is the TH1 domain. Disordered stretches follow at residues 966-1064 (SGTV…LNNN), 1089-1128 (QNHN…AKPK), 1183-1230 (SECP…GGLS), and 1251-1275 (IADA…DDDW). Residues 977 to 992 (PDSQNPKRPRATSSKV) show a composition bias toward polar residues. Residues 1095–1106 (PTAPSRPAKKAA) show a composition bias toward low complexity. Residues 1107–1121 (PAPPVKKTAPPPPPS) are compositionally biased toward pro residues. Residues 1127-1187 (PKWPTFKANY…PTAYISECPP (61 aa)) enclose the SH3 domain. Residues 1254–1263 (ALKKRSATRD) show a composition bias toward basic and acidic residues. The segment covering 1264 to 1275 (SDDEEEDDDDDW) has biased composition (acidic residues).

It belongs to the TRAFAC class myosin-kinesin ATPase superfamily. Myosin family. In terms of processing, phosphorylation of the TEDS site (Ser-361) is required for the polarization of the actin cytoskeleton. Phosphorylation probably activates the myosin-I ATPase activity.

The protein localises to the cytoplasm. It localises to the cytoskeleton. It is found in the actin patch. In terms of biological role, type-I myosin implicated in the organization of the actin cytoskeleton. Required for proper actin cytoskeleton polarization. At the cell cortex, assembles in patch-like structures together with proteins from the actin-polymerizing machinery and promotes actin assembly. Functions as actin nucleation-promoting factor (NPF) for the Arp2/3 complex. In Meyerozyma guilliermondii (strain ATCC 6260 / CBS 566 / DSM 6381 / JCM 1539 / NBRC 10279 / NRRL Y-324) (Yeast), this protein is Myosin-1 (MYO1).